The following is a 116-amino-acid chain: Phosphoribosyl-AMP cyclohydrolase (116 aa).

Aspartate 85 is a binding site for Mg(2+). A Zn(2+)-binding site is contributed by cysteine 86. 2 residues coordinate Mg(2+): aspartate 87 and aspartate 89. Zn(2+) is bound by residues cysteine 102 and cysteine 109.

Belongs to the PRA-CH family. In terms of assembly, homodimer. The cofactor is Mg(2+). Zn(2+) serves as cofactor.

The protein resides in the cytoplasm. The catalysed reaction is 1-(5-phospho-beta-D-ribosyl)-5'-AMP + H2O = 1-(5-phospho-beta-D-ribosyl)-5-[(5-phospho-beta-D-ribosylamino)methylideneamino]imidazole-4-carboxamide. It participates in amino-acid biosynthesis; L-histidine biosynthesis; L-histidine from 5-phospho-alpha-D-ribose 1-diphosphate: step 3/9. Catalyzes the hydrolysis of the adenine ring of phosphoribosyl-AMP. In Corynebacterium diphtheriae (strain ATCC 700971 / NCTC 13129 / Biotype gravis), this protein is Phosphoribosyl-AMP cyclohydrolase.